A 616-amino-acid polypeptide reads, in one-letter code: Dihydroxy-acid dehydratase 1 (616 aa).

Position 81 (Asp-81) interacts with Mg(2+). Cys-122 is a binding site for [2Fe-2S] cluster. Mg(2+) contacts are provided by Asp-123 and Lys-124. The residue at position 124 (Lys-124) is an N6-carboxylysine. Cys-195 lines the [2Fe-2S] cluster pocket. Residue Glu-491 participates in Mg(2+) binding. The Proton acceptor role is filled by Ser-517.

This sequence belongs to the IlvD/Edd family. In terms of assembly, homodimer. The cofactor is [2Fe-2S] cluster. Mg(2+) is required as a cofactor.

It carries out the reaction (2R)-2,3-dihydroxy-3-methylbutanoate = 3-methyl-2-oxobutanoate + H2O. The catalysed reaction is (2R,3R)-2,3-dihydroxy-3-methylpentanoate = (S)-3-methyl-2-oxopentanoate + H2O. It functions in the pathway amino-acid biosynthesis; L-isoleucine biosynthesis; L-isoleucine from 2-oxobutanoate: step 3/4. Its pathway is amino-acid biosynthesis; L-valine biosynthesis; L-valine from pyruvate: step 3/4. Functions in the biosynthesis of branched-chain amino acids. Catalyzes the dehydration of (2R,3R)-2,3-dihydroxy-3-methylpentanoate (2,3-dihydroxy-3-methylvalerate) into 2-oxo-3-methylpentanoate (2-oxo-3-methylvalerate) and of (2R)-2,3-dihydroxy-3-methylbutanoate (2,3-dihydroxyisovalerate) into 2-oxo-3-methylbutanoate (2-oxoisovalerate), the penultimate precursor to L-isoleucine and L-valine, respectively. This chain is Dihydroxy-acid dehydratase 1, found in Bradyrhizobium diazoefficiens (strain JCM 10833 / BCRC 13528 / IAM 13628 / NBRC 14792 / USDA 110).